A 370-amino-acid chain; its full sequence is MEGLKVTPLRGVYEEYGGKIVDFAGYELPTQFKGFLHEHHTVREKAGLFDVSHMGEAMVTGKDAGKFIQYLMTNDINVLKDNEVLYTFMCNEDGGVIDDLLVYKFAEDEFFLVINASNKDKDVKWIMDHKGDFDVEIADVSDSIAQLALQGPLAEEILQKIVDVDLQEIKFFKLRRDVLVDGKKCLVSRTGYTGEDGFEIYCKPEDAKGLWHAILNAGKEEGAQPIGLGARDTLRFEASLLLYGNEMDETITPLEVGMGFFVKLKVEEDFIGKDALIKQKAEGVTRKLVGFELIDKGIPRHGYEVIKDGKVIGHVTTGYKSPTLNKAIGLALVEEQYSKIGTEFNIKVRKKELKAVAIDKRFYTKKTKTK.

It belongs to the GcvT family. The glycine cleavage system is composed of four proteins: P, T, L and H.

It carries out the reaction N(6)-[(R)-S(8)-aminomethyldihydrolipoyl]-L-lysyl-[protein] + (6S)-5,6,7,8-tetrahydrofolate = N(6)-[(R)-dihydrolipoyl]-L-lysyl-[protein] + (6R)-5,10-methylene-5,6,7,8-tetrahydrofolate + NH4(+). In terms of biological role, the glycine cleavage system catalyzes the degradation of glycine. This chain is Aminomethyltransferase, found in Clostridium botulinum (strain Loch Maree / Type A3).